Here is a 351-residue protein sequence, read N- to C-terminus: Selenide, water dikinase (351 aa).

The active site involves selenocysteine 15. Selenocysteine 15 is a non-standard amino acid (selenocysteine). ATP is bound by residues lysine 18 and 47-49 (DNE). Aspartate 50 provides a ligand contact to Mg(2+). ATP-binding positions include aspartate 67, aspartate 90, and 138 to 140 (GHS). Aspartate 90 contacts Mg(2+). Position 227 (aspartate 227) interacts with Mg(2+).

The protein belongs to the selenophosphate synthase 1 family. Class I subfamily. Homodimer. Mg(2+) serves as cofactor.

It catalyses the reaction hydrogenselenide + ATP + H2O = selenophosphate + AMP + phosphate + 2 H(+). Synthesizes selenophosphate from selenide and ATP. The sequence is that of Selenide, water dikinase from Nitratidesulfovibrio vulgaris (strain ATCC 29579 / DSM 644 / CCUG 34227 / NCIMB 8303 / VKM B-1760 / Hildenborough) (Desulfovibrio vulgaris).